A 201-amino-acid chain; its full sequence is MGSRKCGSCLSSLLIPLALWSIIVNILLYFPNGQASYASSNKLTNYVWYFEGICFSGIMMLVVAAVLLVLENDNNYKCCQSENCSKKYMTVLSMIFSALGIAFSGYCLVISALGLLQGPYCRTLDGWEYAFEGTAGRFLTDSREWIQCLEPAHVVEWNIILFSILIALSGLQVIVCLIRVVIQLSKSLCGTYSVIIQPGII.

Residues 1–9 (MGSRKCGSC) are Cytoplasmic-facing. Residues 10-30 (LSSLLIPLALWSIIVNILLYF) traverse the membrane as a helical segment. Residues 31 to 49 (PNGQASYASSNKLTNYVWY) are Extracellular-facing. A helical transmembrane segment spans residues 50-70 (FEGICFSGIMMLVVAAVLLVL). Over 71 to 93 (ENDNNYKCCQSENCSKKYMTVLS) the chain is Cytoplasmic. The chain crosses the membrane as a helical span at residues 94-114 (MIFSALGIAFSGYCLVISALG). Over 115–157 (LLQGPYCRTLDGWEYAFEGTAGRFLTDSREWIQCLEPAHVVEW) the chain is Extracellular. Residues 158–178 (NIILFSILIALSGLQVIVCLI) traverse the membrane as a helical segment. Topologically, residues 179–201 (RVVIQLSKSLCGTYSVIIQPGII) are cytoplasmic.

This sequence belongs to the L6 tetraspanin family.

The protein resides in the membrane. The sequence is that of Transmembrane 4 L6 family member 18 (TM4SF18) from Bos taurus (Bovine).